The chain runs to 889 residues: Alanine--tRNA ligase (889 aa).

4 residues coordinate Zn(2+): histidine 569, histidine 573, cysteine 671, and histidine 675.

It belongs to the class-II aminoacyl-tRNA synthetase family. Zn(2+) serves as cofactor.

It is found in the cytoplasm. The catalysed reaction is tRNA(Ala) + L-alanine + ATP = L-alanyl-tRNA(Ala) + AMP + diphosphate. Catalyzes the attachment of alanine to tRNA(Ala) in a two-step reaction: alanine is first activated by ATP to form Ala-AMP and then transferred to the acceptor end of tRNA(Ala). Also edits incorrectly charged Ser-tRNA(Ala) and Gly-tRNA(Ala) via its editing domain. The sequence is that of Alanine--tRNA ligase from Parasynechococcus marenigrum (strain WH8102).